Here is a 158-residue protein sequence, read N- to C-terminus: 6,7-dimethyl-8-ribityllumazine synthase (158 aa).

5-amino-6-(D-ribitylamino)uracil contacts are provided by residues phenylalanine 24, alanine 58–glutamate 60, and alanine 82–isoleucine 84. Glycine 87–threonine 88 serves as a coordination point for (2S)-2-hydroxy-3-oxobutyl phosphate. Histidine 90 functions as the Proton donor in the catalytic mechanism. Phenylalanine 115 lines the 5-amino-6-(D-ribitylamino)uracil pocket. Arginine 129 serves as a coordination point for (2S)-2-hydroxy-3-oxobutyl phosphate.

It belongs to the DMRL synthase family. Forms an icosahedral capsid composed of 60 subunits, arranged as a dodecamer of pentamers.

It carries out the reaction (2S)-2-hydroxy-3-oxobutyl phosphate + 5-amino-6-(D-ribitylamino)uracil = 6,7-dimethyl-8-(1-D-ribityl)lumazine + phosphate + 2 H2O + H(+). Its pathway is cofactor biosynthesis; riboflavin biosynthesis; riboflavin from 2-hydroxy-3-oxobutyl phosphate and 5-amino-6-(D-ribitylamino)uracil: step 1/2. Its function is as follows. Catalyzes the formation of 6,7-dimethyl-8-ribityllumazine by condensation of 5-amino-6-(D-ribitylamino)uracil with 3,4-dihydroxy-2-butanone 4-phosphate. This is the penultimate step in the biosynthesis of riboflavin. The protein is 6,7-dimethyl-8-ribityllumazine synthase of Pseudomonas paraeruginosa (strain DSM 24068 / PA7) (Pseudomonas aeruginosa (strain PA7)).